We begin with the raw amino-acid sequence, 259 residues long: (3R)-3-hydroxyacyl-CoA dehydrogenase (259 aa).

NAD(+)-binding positions include 13 to 21 and 40 to 41; these read LVTGAGSGI and DL. Ser58 carries the phosphoserine modification. Lys66 is subject to N6-acetyllysine. Position 72 to 74 (72 to 74) interacts with NAD(+); the sequence is ADV. Residue Ser154 participates in substrate binding. An N6-succinyllysine modification is found at Lys158. Residue Tyr167 is the Proton acceptor of the active site. NAD(+) contacts are provided by residues 167 to 171 and 200 to 202; these read YASSK and IAT. Lys171 is subject to N6-succinyllysine.

The protein belongs to the short-chain dehydrogenases/reductases (SDR) family. As to quaternary structure, heterotetramer with CBR4; contains two molecules of HSD17B8 and CBR4. Kidney, liver, testis, ovary and spleen. Oviduct, uterus, mammary gland, vagina, prostate, clitoral gland and moderately heart, dorsal skin, brain and lung.

It localises to the mitochondrion matrix. The catalysed reaction is a (3R)-3-hydroxyacyl-CoA + NAD(+) = a 3-oxoacyl-CoA + NADH + H(+). It carries out the reaction 17beta-estradiol + NAD(+) = estrone + NADH + H(+). It catalyses the reaction testosterone + NAD(+) = androst-4-ene-3,17-dione + NADH + H(+). The enzyme catalyses 17beta-hydroxy-5alpha-androstan-3-one + NAD(+) = 5alpha-androstan-3,17-dione + NADH + H(+). The protein operates within lipid metabolism; fatty acid biosynthesis. It participates in steroid biosynthesis; estrogen biosynthesis. It functions in the pathway lipid metabolism; mitochondrial fatty acid beta-oxidation. Required for the solubility and assembly of the heterotetramer 3-ketoacyl-[acyl carrier protein] (ACP) reductase functional complex (KAR or KAR1) that forms part of the mitochondrial fatty acid synthase (mtFAS). Alpha-subunit of the KAR complex, acts as scaffold protein, required for the stability of carbonyl reductase type-4 (CBR4, beta-subunit of the KAR complex) and for its 3-ketoacyl-ACP reductase activity, thereby participating in mitochondrial fatty acid biosynthesis. Catalyzes the NAD-dependent conversion of (3R)-3-hydroxyacyl-CoA into 3-ketoacyl-CoA (3-oxoacyl-CoA) with no chain length preference, this enzymatic activity is not needed for the KAR function. Prefers (3R)-3-hydroxyacyl-CoA over (3S)-3-hydroxyacyl-CoA and displays enzymatic activity only in the presence of NAD(+)(H). Cooperates with enoyl-CoA hydratase 1 in mitochondria, together they constitute an alternative route to the auxiliary enzyme pathways for the breakdown of Z-PUFA (cis polyunsaturated fatty acid) enoyl-esters. NAD-dependent 17-beta-hydroxysteroid dehydrogenase with highest activity towards estradiol. It efficiently catalyzes the oxidation of estradiol (E2), testosterone, and dihydrotestosterone. Primarily an oxidative enzyme, it can switch to a reductive mode determined in the appropriate physiologic milieu and catalyze the reduction of estrone (E1) to form biologically active estradiol (E2). The sequence is that of (3R)-3-hydroxyacyl-CoA dehydrogenase (Hsd17b8) from Mus musculus (Mouse).